A 199-amino-acid chain; its full sequence is Dephospho-CoA kinase (199 aa).

Residues 3–199 (TLGVTGGIGS…ELYWAVTGGQ (197 aa)) form the DPCK domain. 11–16 (GSGKTT) provides a ligand contact to ATP.

Belongs to the CoaE family.

It localises to the cytoplasm. The catalysed reaction is 3'-dephospho-CoA + ATP = ADP + CoA + H(+). It functions in the pathway cofactor biosynthesis; coenzyme A biosynthesis; CoA from (R)-pantothenate: step 5/5. Catalyzes the phosphorylation of the 3'-hydroxyl group of dephosphocoenzyme A to form coenzyme A. The sequence is that of Dephospho-CoA kinase from Salinibacter ruber (strain DSM 13855 / M31).